Here is a 637-residue protein sequence, read N- to C-terminus: Formate--tetrahydrofolate ligase (637 aa).

Residue 81–88 (TPLGEGKS) participates in ATP binding.

It belongs to the formate--tetrahydrofolate ligase family. As to quaternary structure, homodimer.

The enzyme catalyses (6S)-5,6,7,8-tetrahydrofolate + formate + ATP = (6R)-10-formyltetrahydrofolate + ADP + phosphate. The protein operates within one-carbon metabolism; tetrahydrofolate interconversion. This is Formate--tetrahydrofolate ligase from Spinacia oleracea (Spinach).